A 166-amino-acid polypeptide reads, in one-letter code: Lipoprotein signal peptidase (166 aa).

Helical transmembrane passes span 12–32 (LPIALFILVALVADQAIKYLV), 66–86 (MEGWFIVGMRLAVVAFVLWLW), and 101–121 (AMIIAGALGNLVDRLLFGYVI). Active-site residues include Asp-122 and Asp-140. The helical transmembrane segment at 132 to 152 (SFAVFNLADSFITVGAGAIIL) threads the bilayer.

The protein belongs to the peptidase A8 family.

It localises to the cell inner membrane. It carries out the reaction Release of signal peptides from bacterial membrane prolipoproteins. Hydrolyzes -Xaa-Yaa-Zaa-|-(S,diacylglyceryl)Cys-, in which Xaa is hydrophobic (preferably Leu), and Yaa (Ala or Ser) and Zaa (Gly or Ala) have small, neutral side chains.. It participates in protein modification; lipoprotein biosynthesis (signal peptide cleavage). This protein specifically catalyzes the removal of signal peptides from prolipoproteins. This Sinorhizobium fredii (strain NBRC 101917 / NGR234) protein is Lipoprotein signal peptidase.